Reading from the N-terminus, the 194-residue chain is 21 kDa hemolysin (194 aa).

The N-terminal stretch at 1 to 19 is a signal peptide; that stretch reads MRTRSRSTVRPLWPPPSPA. BON domains follow at residues 49–118 and 127–194; these read DDEV…RTGE and IDSW…NYVQ.

It is found in the periplasm. This Actinobacillus pleuropneumoniae (Haemophilus pleuropneumoniae) protein is 21 kDa hemolysin (hly).